A 246-amino-acid polypeptide reads, in one-letter code: Pyridoxine 5'-phosphate synthase (246 aa).

N10 contributes to the 3-amino-2-oxopropyl phosphate binding site. 12–13 is a binding site for 1-deoxy-D-xylulose 5-phosphate; it reads DH. R21 contacts 3-amino-2-oxopropyl phosphate. Residue H46 is the Proton acceptor of the active site. Residues R48 and H53 each contribute to the 1-deoxy-D-xylulose 5-phosphate site. Residue E73 is the Proton acceptor of the active site. 1-deoxy-D-xylulose 5-phosphate is bound at residue T103. H193 acts as the Proton donor in catalysis. Residues G194 and 215 to 216 each bind 3-amino-2-oxopropyl phosphate; that span reads GH.

It belongs to the PNP synthase family. Homooctamer; tetramer of dimers.

The protein localises to the cytoplasm. The catalysed reaction is 3-amino-2-oxopropyl phosphate + 1-deoxy-D-xylulose 5-phosphate = pyridoxine 5'-phosphate + phosphate + 2 H2O + H(+). It functions in the pathway cofactor biosynthesis; pyridoxine 5'-phosphate biosynthesis; pyridoxine 5'-phosphate from D-erythrose 4-phosphate: step 5/5. In terms of biological role, catalyzes the complicated ring closure reaction between the two acyclic compounds 1-deoxy-D-xylulose-5-phosphate (DXP) and 3-amino-2-oxopropyl phosphate (1-amino-acetone-3-phosphate or AAP) to form pyridoxine 5'-phosphate (PNP) and inorganic phosphate. This is Pyridoxine 5'-phosphate synthase from Rhodopirellula baltica (strain DSM 10527 / NCIMB 13988 / SH1).